The sequence spans 220 residues: MADS-box protein AGL24 (220 aa).

The 61-residue stretch at 1-61 (MAREKIRIKK…GKLFEFSSSR (61 aa)) folds into the MADS-box domain. Residues 87–177 (LRLENCNLSR…RDKLETLERA (91 aa)) enclose the K-box domain. A compositionally biased stretch (polar residues) spans 190–200 (SVTTNVSSYDS). The segment at 190-220 (SVTTNVSSYDSGTPLEDDSDTSLKLGLPSWE) is disordered.

In terms of assembly, interacts with IMK3/MRLK. Forms a homodimer and heterodimer with SOC1, AP1 and SVP through MADS-box domain. Interacts with the SEU-LUG corepressor complex when complexed to AP1. Interacts with AGL15 and AGL16. Post-translationally, phosphorylated by IMK3. Induced by vernalization. As to expression, mostly expressed in shoot apical meristems, including floral meristems. Also detected in stems, seedlings, leaves, flowers and siliques, and, to a lower extent, in roots.

It localises to the nucleus. The protein resides in the cytoplasm. In terms of biological role, transcription activator that mediates floral transition in response to vernalization. Promotes inflorescence fate in apical meristems. Acts in a dosage-dependent manner. Probably involved in the transduction of RLK-mediated signaling (e.g. IMK3 pathway). Together with AP1 and SVP, controls the identity of the floral meristem and regulates expression of class B, C and E genes. When associated with SOC1, mediates effect of gibberellins on flowering under short-day conditions, and regulates the expression of LEAFY (LFY), which links floral induction and floral development. Confers inflorescence characteristics to floral primordia and early flowering. In Arabidopsis thaliana (Mouse-ear cress), this protein is MADS-box protein AGL24 (AGL24).